The sequence spans 579 residues: Glypican-3 (579 aa).

A signal peptide spans 1-24 (MAGTVRTACLLVAMLLGLGCLGQA). Glutamine 25 bears the Pyrrolidone carboxylic acid mark. Cystine bridges form between cysteine 34-cysteine 71, cysteine 64-cysteine 261, cysteine 72-cysteine 264, cysteine 196-cysteine 348, cysteine 251-cysteine 284, cysteine 273-cysteine 421, and cysteine 277-cysteine 409. N-linked (GlcNAc...) asparagine glycosylation is found at asparagine 123 and asparagine 240. Position 351 is a phosphoserine (serine 351). The N-linked (GlcNAc...) asparagine glycan is linked to asparagine 417. O-linked (Xyl...) (glycosaminoglycan) serine glycans are attached at residues serine 494 and serine 508. Positions 533-552 (DAPGNKQHGNQKDNEITTSH) are disordered. Residue serine 553 is the site of GPI-anchor amidated serine attachment. Positions 554–579 (VGNMPSPLKILISVAIYVACFFFLVH) are cleaved as a propeptide — removed in mature form.

Belongs to the glypican family. In terms of assembly, heterodimer; disulfide-linked. Cleavage by a furin-like convertase results in production of alpha and beta chains which form a disulfide-linked heterodimer. Interacts with DPP4. Interacts with FGF2. Interacts with WNT5A. Also interacts with WNT3A and WNT7B. Interacts with hedgehog protein SHH; the heparan sulfate chains are not required for the interaction. Also interacts with hedgehog protein IHH. Interacts with CD81. Interacts with Wnt receptors FZD4, FZD7 and FZD8; the heparan sulfate chains are required for the interaction. O-glycosylated; contains heparan sulfate and/or chondroitin sulfate. Post-translationally, cleaved intracellularly by a furin-like convertase to generate 2 subunits, alpha and beta, which remain associated through disulfide bonds and are associated with the cell surface via the GPI-anchor. This processing is essential for its role in inhibition of hedgehog signaling. A second proteolytic event may result in cleavage of the protein on the cell surface, separating it from the GPI-anchor and leading to its shedding from the cell surface. In the developing limb, absent from the apical epidermal ridge at 11 dpc but highly expressed in the underlying mesenchyme. Expression in the mesenchyme at this stage is asymmetric with highest levels in the regions of the distal mesenchyme within the progress zone and within the proximal anterior and posterior limb bud. At later developmental stages including 12.5 and 13.5 dpc, expression is restricted to the interdigital webs and the regions of chondrocytic differentiation of the developing bones. In the embryonic kidney, expressed in both the ureteric bud and mesenchymal cells as early as 13.5 dpc. Expression at 16.5 dpc is similar to that at 13.5 dpc but decreases by 18.5 dpc.

The protein localises to the cell membrane. Cell surface proteoglycan. Negatively regulates the hedgehog signaling pathway when attached via the GPI-anchor to the cell surface by competing with the hedgehog receptor PTC1 for binding to hedgehog proteins. Binding to the hedgehog protein SHH triggers internalization of the complex by endocytosis and its subsequent lysosomal degradation. Positively regulates the canonical Wnt signaling pathway by binding to the Wnt receptor Frizzled and stimulating the binding of the Frizzled receptor to Wnt ligands. Positively regulates the non-canonical Wnt signaling pathway. Binds to CD81 which decreases the availability of free CD81 for binding to the transcriptional repressor HHEX, resulting in nuclear translocation of HHEX and transcriptional repression. Inhibits the dipeptidyl peptidase activity of DPP4. Plays a role in limb patterning and skeletal development by controlling the cellular response to BMP4. Modulates the effects of growth factors BMP2, BMP7 and FGF7 on renal branching morphogenesis. Required for coronary vascular development. Plays a role in regulating cell movements during gastrulation. The polypeptide is Glypican-3 (Gpc3) (Mus musculus (Mouse)).